A 307-amino-acid chain; its full sequence is Aspartate carbamoyltransferase catalytic subunit (307 aa).

R51 and T52 together coordinate carbamoyl phosphate. Residue K80 coordinates L-aspartate. The carbamoyl phosphate site is built by R101, H129, and Q132. L-aspartate is bound by residues R162 and R225. L264 and P265 together coordinate carbamoyl phosphate.

Belongs to the aspartate/ornithine carbamoyltransferase superfamily. ATCase family. As to quaternary structure, heterododecamer (2C3:3R2) of six catalytic PyrB chains organized as two trimers (C3), and six regulatory PyrI chains organized as three dimers (R2).

The catalysed reaction is carbamoyl phosphate + L-aspartate = N-carbamoyl-L-aspartate + phosphate + H(+). Its pathway is pyrimidine metabolism; UMP biosynthesis via de novo pathway; (S)-dihydroorotate from bicarbonate: step 2/3. Functionally, catalyzes the condensation of carbamoyl phosphate and aspartate to form carbamoyl aspartate and inorganic phosphate, the committed step in the de novo pyrimidine nucleotide biosynthesis pathway. The chain is Aspartate carbamoyltransferase catalytic subunit from Lachnoclostridium phytofermentans (strain ATCC 700394 / DSM 18823 / ISDg) (Clostridium phytofermentans).